Reading from the N-terminus, the 85-residue chain is Large ribosomal subunit protein bL27 (85 aa).

Positions 1–23 (MAHKKAGGSSRNGRDSESKRLGV) are disordered.

The protein belongs to the bacterial ribosomal protein bL27 family.

This Methylococcus capsulatus (strain ATCC 33009 / NCIMB 11132 / Bath) protein is Large ribosomal subunit protein bL27.